The following is a 147-amino-acid chain: Large ribosomal subunit protein uL15 (147 aa).

Over residues 1-13 the composition is skewed to basic and acidic residues; it reads MELHSLKAAEGSR. Residues 1–57 form a disordered region; the sequence is MELHSLKAAEGSRKVRNRVGRGTSSGNGKTSGRGQKGQKSRSGGGVRPGFEGGQTEL. Gly residues-rich tracts occupy residues 23–35 and 42–52; these read TSSG…GRGQ and SGGGVRPGFEG.

This sequence belongs to the universal ribosomal protein uL15 family. In terms of assembly, part of the 50S ribosomal subunit.

In terms of biological role, binds to the 23S rRNA. This is Large ribosomal subunit protein uL15 from Lactococcus lactis subsp. cremoris (strain MG1363).